A 177-amino-acid chain; its full sequence is Large ribosomal subunit protein uL6 (177 aa).

Belongs to the universal ribosomal protein uL6 family. As to quaternary structure, part of the 50S ribosomal subunit.

In terms of biological role, this protein binds to the 23S rRNA, and is important in its secondary structure. It is located near the subunit interface in the base of the L7/L12 stalk, and near the tRNA binding site of the peptidyltransferase center. This Pseudomonas putida (strain W619) protein is Large ribosomal subunit protein uL6.